The primary structure comprises 243 residues: Pyridoxine 5'-phosphate synthase (243 aa).

Asparagine 9 serves as a coordination point for 3-amino-2-oxopropyl phosphate. 11-12 provides a ligand contact to 1-deoxy-D-xylulose 5-phosphate; the sequence is DH. A 3-amino-2-oxopropyl phosphate-binding site is contributed by arginine 20. Histidine 45 acts as the Proton acceptor in catalysis. The 1-deoxy-D-xylulose 5-phosphate site is built by arginine 47 and histidine 52. The active-site Proton acceptor is the glutamate 72. Residue threonine 102 coordinates 1-deoxy-D-xylulose 5-phosphate. Histidine 193 acts as the Proton donor in catalysis. 3-amino-2-oxopropyl phosphate-binding positions include glycine 194 and 215–216; that span reads GH.

Belongs to the PNP synthase family. Homooctamer; tetramer of dimers.

The protein resides in the cytoplasm. It carries out the reaction 3-amino-2-oxopropyl phosphate + 1-deoxy-D-xylulose 5-phosphate = pyridoxine 5'-phosphate + phosphate + 2 H2O + H(+). Its pathway is cofactor biosynthesis; pyridoxine 5'-phosphate biosynthesis; pyridoxine 5'-phosphate from D-erythrose 4-phosphate: step 5/5. Its function is as follows. Catalyzes the complicated ring closure reaction between the two acyclic compounds 1-deoxy-D-xylulose-5-phosphate (DXP) and 3-amino-2-oxopropyl phosphate (1-amino-acetone-3-phosphate or AAP) to form pyridoxine 5'-phosphate (PNP) and inorganic phosphate. The sequence is that of Pyridoxine 5'-phosphate synthase from Escherichia coli O6:H1 (strain CFT073 / ATCC 700928 / UPEC).